The primary structure comprises 309 residues: Ribonuclease Z (309 aa).

The Zn(2+) site is built by histidine 63, histidine 65, aspartate 67, histidine 68, histidine 145, aspartate 216, and histidine 274. Catalysis depends on aspartate 67, which acts as the Proton acceptor.

The protein belongs to the RNase Z family. Homodimer. It depends on Zn(2+) as a cofactor.

The catalysed reaction is Endonucleolytic cleavage of RNA, removing extra 3' nucleotides from tRNA precursor, generating 3' termini of tRNAs. A 3'-hydroxy group is left at the tRNA terminus and a 5'-phosphoryl group is left at the trailer molecule.. Its function is as follows. Zinc phosphodiesterase, which displays some tRNA 3'-processing endonuclease activity. Probably involved in tRNA maturation, by removing a 3'-trailer from precursor tRNA. The chain is Ribonuclease Z from Streptococcus suis (strain 98HAH33).